Reading from the N-terminus, the 321-residue chain is Transmembrane protein fend (321 aa).

A signal peptide spans 1-18 (MFHSLVLMACALAALSVA). The Extracellular segment spans residues 19-261 (QGAGSARSKS…ALPTPSELGG (243 aa)). A helical transmembrane segment spans residues 262–282 (VVYPAFGALAFFLALLVMFLF). Residues 283–321 (LRPQRKRFPLDADSADTATLIGRSSSSSRNSMDASTLHV) lie on the Cytoplasmic side of the membrane.

Its subcellular location is the membrane. Functionally, involved in the normal targeting of ventral muscle, muscle 12, by motoneurons. May function as an axon guidance molecule involved in neuromuscular specificity. This is Transmembrane protein fend (fend) from Drosophila melanogaster (Fruit fly).